A 259-amino-acid polypeptide reads, in one-letter code: Binding partner of ACD11 1 (259 aa).

Residues 6 to 77 (RSVKVGNLSS…QSVIIELAPN (72 aa)) enclose the RRM domain. Residues 219-259 (GEVGQKTKEKVEAEQPSQPAQSQQQLPEGYSPIHSSEYSKN) are disordered. Low complexity predominate over residues 232-243 (EQPSQPAQSQQQ).

As to quaternary structure, interacts with ACD11, PR1F2 and PR1F3.

It localises to the cytoplasm. The protein resides in the membrane. In Arabidopsis thaliana (Mouse-ear cress), this protein is Binding partner of ACD11 1 (BPA1).